Here is a 206-residue protein sequence, read N- to C-terminus: Protein GrpE (206 aa).

The protein belongs to the GrpE family. As to quaternary structure, homodimer.

The protein resides in the cytoplasm. Functionally, participates actively in the response to hyperosmotic and heat shock by preventing the aggregation of stress-denatured proteins, in association with DnaK and GrpE. It is the nucleotide exchange factor for DnaK and may function as a thermosensor. Unfolded proteins bind initially to DnaJ; upon interaction with the DnaJ-bound protein, DnaK hydrolyzes its bound ATP, resulting in the formation of a stable complex. GrpE releases ADP from DnaK; ATP binding to DnaK triggers the release of the substrate protein, thus completing the reaction cycle. Several rounds of ATP-dependent interactions between DnaJ, DnaK and GrpE are required for fully efficient folding. The protein is Protein GrpE of Psychromonas ingrahamii (strain DSM 17664 / CCUG 51855 / 37).